Reading from the N-terminus, the 297-residue chain is 4-hydroxy-tetrahydrodipicolinate synthase (297 aa).

Thr-49 contacts pyruvate. Catalysis depends on Tyr-137, which acts as the Proton donor/acceptor. Lys-166 (schiff-base intermediate with substrate) is an active-site residue. Ile-208 contacts pyruvate.

It belongs to the DapA family. Homotetramer; dimer of dimers.

The protein localises to the cytoplasm. It carries out the reaction L-aspartate 4-semialdehyde + pyruvate = (2S,4S)-4-hydroxy-2,3,4,5-tetrahydrodipicolinate + H2O + H(+). It participates in amino-acid biosynthesis; L-lysine biosynthesis via DAP pathway; (S)-tetrahydrodipicolinate from L-aspartate: step 3/4. Catalyzes the condensation of (S)-aspartate-beta-semialdehyde [(S)-ASA] and pyruvate to 4-hydroxy-tetrahydrodipicolinate (HTPA). The polypeptide is 4-hydroxy-tetrahydrodipicolinate synthase (Prosthecochloris aestuarii (strain DSM 271 / SK 413)).